The sequence spans 329 residues: Glycerol-3-phosphate dehydrogenase [NAD(P)+] (329 aa).

NADPH is bound by residues S10, W11, R31, and K105. Sn-glycerol 3-phosphate is bound by residues K105, G134, and S136. Position 138 (A138) interacts with NADPH. K189, D242, S252, R253, and N254 together coordinate sn-glycerol 3-phosphate. Catalysis depends on K189, which acts as the Proton acceptor. R253 contacts NADPH. 2 residues coordinate NADPH: V277 and E279.

Belongs to the NAD-dependent glycerol-3-phosphate dehydrogenase family.

The protein localises to the cytoplasm. The enzyme catalyses sn-glycerol 3-phosphate + NAD(+) = dihydroxyacetone phosphate + NADH + H(+). The catalysed reaction is sn-glycerol 3-phosphate + NADP(+) = dihydroxyacetone phosphate + NADPH + H(+). It functions in the pathway membrane lipid metabolism; glycerophospholipid metabolism. Catalyzes the reduction of the glycolytic intermediate dihydroxyacetone phosphate (DHAP) to sn-glycerol 3-phosphate (G3P), the key precursor for phospholipid synthesis. This Neisseria meningitidis serogroup A / serotype 4A (strain DSM 15465 / Z2491) protein is Glycerol-3-phosphate dehydrogenase [NAD(P)+].